A 432-amino-acid chain; its full sequence is 3-chlorobenzoate-3,4-dioxygenase oxygenase subunit (432 aa).

Positions 27–133 (WIPALKSTEL…VKEMAGVVWV (107 aa)) constitute a Rieske domain. Positions 69, 71, 88, and 91 each coordinate [2Fe-2S] cluster. Fe cation-binding residues include His-180 and His-185.

Belongs to the bacterial ring-hydroxylating dioxygenase alpha subunit family. In terms of assembly, this dioxygenase system consists of two proteins: an oxygenase and an oxygenase reductase. It depends on [2Fe-2S] cluster as a cofactor. The cofactor is Fe cation.

This chain is 3-chlorobenzoate-3,4-dioxygenase oxygenase subunit (cbaA), found in Comamonas testosteroni (Pseudomonas testosteroni).